We begin with the raw amino-acid sequence, 207 residues long: ATP-dependent Clp protease proteolytic subunit (207 aa).

S111 acts as the Nucleophile in catalysis. H136 is an active-site residue.

This sequence belongs to the peptidase S14 family. Fourteen ClpP subunits assemble into 2 heptameric rings which stack back to back to give a disk-like structure with a central cavity, resembling the structure of eukaryotic proteasomes.

It is found in the cytoplasm. It carries out the reaction Hydrolysis of proteins to small peptides in the presence of ATP and magnesium. alpha-casein is the usual test substrate. In the absence of ATP, only oligopeptides shorter than five residues are hydrolyzed (such as succinyl-Leu-Tyr-|-NHMec, and Leu-Tyr-Leu-|-Tyr-Trp, in which cleavage of the -Tyr-|-Leu- and -Tyr-|-Trp bonds also occurs).. Its function is as follows. Cleaves peptides in various proteins in a process that requires ATP hydrolysis. Has a chymotrypsin-like activity. Plays a major role in the degradation of misfolded proteins. The sequence is that of ATP-dependent Clp protease proteolytic subunit from Burkholderia mallei (strain ATCC 23344).